We begin with the raw amino-acid sequence, 215 residues long: MSENSNHHCIIVGIAGASASGKSLIASTIYNELRAKVGDHQIGVITEDSYYKDQSHLTMEERVKTNYDHPNALDHRLLSEHLEQLMRGEAVNIPTYSYTEHTRTSDVEVMTPKKVIILEGILLLTDPRLRNLMHASVFMDTPLDICLLRRAKRDVEERGRSMESVFEQYQKTVRPMFMQFIDPSKQHADIIVPRGGKNRIAIDVLKAHISRLLKA.

16–23 (GASASGKS) serves as a coordination point for ATP.

Belongs to the uridine kinase family.

The protein localises to the cytoplasm. It carries out the reaction uridine + ATP = UMP + ADP + H(+). It catalyses the reaction cytidine + ATP = CMP + ADP + H(+). The protein operates within pyrimidine metabolism; CTP biosynthesis via salvage pathway; CTP from cytidine: step 1/3. It participates in pyrimidine metabolism; UMP biosynthesis via salvage pathway; UMP from uridine: step 1/1. The chain is Uridine kinase from Aliivibrio salmonicida (strain LFI1238) (Vibrio salmonicida (strain LFI1238)).